Consider the following 79-residue polypeptide: Acyl carrier protein (79 aa).

A Carrier domain is found at Ser-2–Leu-77. Ser-37 is modified (O-(pantetheine 4'-phosphoryl)serine).

Belongs to the acyl carrier protein (ACP) family. 4'-phosphopantetheine is transferred from CoA to a specific serine of apo-ACP by AcpS. This modification is essential for activity because fatty acids are bound in thioester linkage to the sulfhydryl of the prosthetic group.

The protein localises to the cytoplasm. The protein operates within lipid metabolism; fatty acid biosynthesis. Its function is as follows. Carrier of the growing fatty acid chain in fatty acid biosynthesis. The polypeptide is Acyl carrier protein (Phenylobacterium zucineum (strain HLK1)).